A 297-amino-acid polypeptide reads, in one-letter code: uncharacterized protein (297 aa).

Helical transmembrane passes span 3 to 23, 38 to 58, 103 to 123, and 128 to 148; these read DYIY…LYML, VIHI…MPAL, IEGI…TALL, and YVFL…LLAM.

The protein localises to the cell membrane. This is an uncharacterized protein from Bacillus subtilis (strain 168).